The sequence spans 424 residues: MIENNAAYLQTLGQQAKQASYALAGLTGQQKQALLSAIAGSLTKNSATILAANAKDVVAARSNGLNDAMIDRLLLDESRLQGVIGDIDNVINLTDPVGTELESQVLDNGLRLSRRRVPLGVIGVIYEARPNVTVDIAVLALKTGNAVILRGGKETLQSNLALSEAIRAAVVEQGLPADSVQLIQSPDRALVSGLLKLDQFVDMIVPRGGQNLQRLCAEQATIPVILGGIGICHLYADKDADIAKSIAVIANAKVQRPTVCNALDTVLVHEAIADQLLPQLYTHLAASGVTFYGCQSAQAIADKLGVAISIATEETYGQEWLSLTLGVKVVSDIDTAIDHIRTYSSGHSEGILTDSIHASAHFVNEVDSAAVYVNASTRFTDGGQFGLGAEVAVSTQKLHARGPMGLEALTTYKWIGVGEYTARS.

Belongs to the gamma-glutamyl phosphate reductase family.

It localises to the cytoplasm. The catalysed reaction is L-glutamate 5-semialdehyde + phosphate + NADP(+) = L-glutamyl 5-phosphate + NADPH + H(+). It participates in amino-acid biosynthesis; L-proline biosynthesis; L-glutamate 5-semialdehyde from L-glutamate: step 2/2. Its function is as follows. Catalyzes the NADPH-dependent reduction of L-glutamate 5-phosphate into L-glutamate 5-semialdehyde and phosphate. The product spontaneously undergoes cyclization to form 1-pyrroline-5-carboxylate. The sequence is that of Gamma-glutamyl phosphate reductase from Shewanella sediminis (strain HAW-EB3).